Consider the following 383-residue polypeptide: ATP phosphoribosyltransferase regulatory subunit (383 aa).

It belongs to the class-II aminoacyl-tRNA synthetase family. HisZ subfamily. Heteromultimer composed of HisG and HisZ subunits.

It is found in the cytoplasm. The protein operates within amino-acid biosynthesis; L-histidine biosynthesis; L-histidine from 5-phospho-alpha-D-ribose 1-diphosphate: step 1/9. Required for the first step of histidine biosynthesis. May allow the feedback regulation of ATP phosphoribosyltransferase activity by histidine. This is ATP phosphoribosyltransferase regulatory subunit from Lactiplantibacillus plantarum (strain ATCC BAA-793 / NCIMB 8826 / WCFS1) (Lactobacillus plantarum).